The sequence spans 266 residues: Respiratory nitrate reductase beta chain (266 aa).

4Fe-4S ferredoxin-type domains follow at residues 3-32 and 30-61; these read VGMV…AWFN and WFNN…KREE. [4Fe-4S] cluster contacts are provided by cysteine 12, cysteine 15, cysteine 18, cysteine 22, cysteine 39, cysteine 42, and cysteine 47. Residues cysteine 51 and cysteine 73 each coordinate [3Fe-4S] cluster. Positions 77, 81, 84, 96, and 100 each coordinate [4Fe-4S] cluster.

As to quaternary structure, heterotrimer composed of an alpha, a beta and a gamma chain. Alpha and beta are catalytic chains; gamma chains are involved in binding the enzyme complex to the cytoplasmic membrane. Requires [4Fe-4S] cluster as cofactor. [3Fe-4S] cluster is required as a cofactor.

It localises to the cell membrane. The protein localises to the cytoplasm. The enzyme catalyses nitrate + a quinol = a quinone + nitrite + H2O. With respect to regulation, inhibited by micromolar concentrations of azide. In terms of biological role, the nitrate reductase enzyme complex allows Bradyrhizobium sp. USDA 3045 to use nitrate as an electron acceptor during anaerobic growth. The beta chain is an electron transfer unit containing four cysteine clusters involved in the formation of iron-sulfur centers. Electrons are transferred from the gamma chain to the molybdenum cofactor of the alpha subunit. This chain is Respiratory nitrate reductase beta chain (narH), found in Bradyrhizobium sp.